The following is a 423-amino-acid chain: Proline racemase A (423 aa).

The signal sequence occupies residues 1–31 (MRKSVCPKQKFFFSAFPFFFFFCVFPLISRT). The Proton acceptor role is filled by cysteine 160. 161–162 (GH) is a binding site for substrate. Residues asparagine 213, asparagine 266, and asparagine 282 are each glycosylated (N-linked (GlcNAc...) asparagine). Residue aspartate 326 participates in substrate binding. Cysteine 330 serves as the catalytic Proton donor. Residue 331-332 (GT) participates in substrate binding.

This sequence belongs to the proline racemase family. In terms of assembly, homodimer.

The protein localises to the secreted. It is found in the membrane. Its subcellular location is the cytoplasm. The enzyme catalyses L-proline = D-proline. With respect to regulation, inhibited by maleic acid, iodoacetamide, iodoacetate and, most particularly, pyrrole-2-carboxylic acid. In terms of biological role, catalyzes the interconversion of L- and D-proline. Secreted isoform 1 contributes to parasite immune evasion by acting as a B-cell mitogen. Probably involved in parasite differentiation and infectivity. This is Proline racemase A (PA45-A) from Trypanosoma cruzi (strain CL Brener).